Here is a 952-residue protein sequence, read N- to C-terminus: UPF0182 protein SRU_2225 (952 aa).

Helical transmembrane passes span 12–32, 52–72, 109–129, 168–188, 207–227, 247–267, and 277–297; these read ILLG…GLVV, AQVL…GGNF, LGYV…SGRW, AVVG…VIAG, LGAN…LDLY, VVIP…GLVG, and LLGI…VLAP. Residues 917 to 952 form a disordered region; it reads VPLPDTTGTVPPPTSSDTTGTMTAPTGDVSEVTGGS. Residues 931–940 show a composition bias toward polar residues; that stretch reads SSDTTGTMTA.

Belongs to the UPF0182 family.

It is found in the cell membrane. The polypeptide is UPF0182 protein SRU_2225 (Salinibacter ruber (strain DSM 13855 / M31)).